The chain runs to 315 residues: Probable cell division protein WhiA (315 aa).

The segment at residues 275–309 (NLKELGEMVPSGVVSKSGINHRLRKINEIADKIRE) is a DNA-binding region (H-T-H motif).

Belongs to the WhiA family.

Its function is as follows. Involved in cell division and chromosome segregation. The chain is Probable cell division protein WhiA from Brevibacillus brevis (strain 47 / JCM 6285 / NBRC 100599).